Here is a 174-residue protein sequence, read N- to C-terminus: ATP-dependent protease subunit HslV (174 aa).

T2 is an active-site residue. Residues G157, D160, and T163 each contribute to the Na(+) site.

Belongs to the peptidase T1B family. HslV subfamily. A double ring-shaped homohexamer of HslV is capped on each side by a ring-shaped HslU homohexamer. The assembly of the HslU/HslV complex is dependent on binding of ATP.

It localises to the cytoplasm. It catalyses the reaction ATP-dependent cleavage of peptide bonds with broad specificity.. With respect to regulation, allosterically activated by HslU binding. In terms of biological role, protease subunit of a proteasome-like degradation complex believed to be a general protein degrading machinery. The protein is ATP-dependent protease subunit HslV of Aliivibrio fischeri (strain MJ11) (Vibrio fischeri).